The primary structure comprises 43 residues: KVFEILDMDRSFIEEELKLFALSSAETAAFLKIGVEEFQALVK.

2 EF-hand domains span residues 1–20 and 22–43; these read KVFEILDMDRSFIEEELKLF and LSSAETAAFLKIGVEEFQALVK. Residues aspartate 7, aspartate 9, serine 11, phenylalanine 12, glutamate 14, glutamate 16, and glutamate 37 each contribute to the Ca(2+) site.

In terms of tissue distribution, detected in muscle and cutaneous mucus. In the skin, detected in cells in the basal region of the glandular epithelium of the dermal mucus glands (at protein level).

Its subcellular location is the cytoplasm. The protein resides in the secreted. Functionally, in muscle, parvalbumin is thought to be involved in relaxation after contraction. It binds two calcium ions. This Rana temporaria (European common frog) protein is Parvalbumin beta.